The sequence spans 404 residues: Argininosuccinate synthase (404 aa).

Residues 12-20 and A39 each bind ATP; that span reads AYSGGLDTS. The L-citrulline site is built by Y91 and S96. G121 provides a ligand contact to ATP. 3 residues coordinate L-aspartate: T123, N127, and D128. N127 is an L-citrulline binding site. L-citrulline-binding residues include R131, S180, S189, E265, and Y277.

The protein belongs to the argininosuccinate synthase family. Type 1 subfamily. Homotetramer.

Its subcellular location is the cytoplasm. It carries out the reaction L-citrulline + L-aspartate + ATP = 2-(N(omega)-L-arginino)succinate + AMP + diphosphate + H(+). The protein operates within amino-acid biosynthesis; L-arginine biosynthesis; L-arginine from L-ornithine and carbamoyl phosphate: step 2/3. This Vibrio parahaemolyticus serotype O3:K6 (strain RIMD 2210633) protein is Argininosuccinate synthase.